The chain runs to 167 residues: Bacterial non-heme ferritin (167 aa).

One can recognise a Ferritin-like diiron domain in the interval M1 to G145. Residues E17, E50, H53, E94, and Q127 each contribute to the Fe cation site.

This sequence belongs to the ferritin family. Prokaryotic subfamily. Homooligomer of 24 subunits that assemble into a spherical protein shell (12 +/- 1 nM diameter) that can sequester at least 2000 iron atoms.

It is found in the cytoplasm. The catalysed reaction is 4 Fe(2+) + O2 + 6 H2O = 4 iron(III) oxide-hydroxide + 12 H(+). Its function is as follows. Iron-storage protein. The chain is Bacterial non-heme ferritin (ftn) from Campylobacter jejuni subsp. jejuni serotype O:2 (strain ATCC 700819 / NCTC 11168).